The chain runs to 949 residues: MARHETSFPEILDVAALRARCDFIASAHAEQREPMRRALLAAFKEANIAGRAKARELLAADGAGIKCAERISWLQDQLITLLHDFVLNQVFDAAKAPETSRIAVTAVGGYGRGTLAPGSDIDLLFLLPAKKAVWAEPAIEFMLYILWDLGFKVGHATRTIEDCIRLSRADMTIRTAILECRYVCGSVALASELETRFDHEIVRNTGPEFIAAKLAERDERHRKAGDTRYLVEPNVKEGKGGLRDLHTLFWISKYFYRVKDSADLVKLGVLSRQEYKLFQKAEDFLWAVRCHMHFLTGKAEERLSFDIQREIAEALGYHDHPGLSAVERFMKHYFLVAKDVGDLTRIFCSALEDQQAKDAPGISGVISRFRNRVRKIPGTLDFVDDGGRIALASPDVFKRDPVNLLRMFHIADINGLEFHPAALKQVTRSLSLITPHLRENEEANRLFLSILTSRRNPELILRRMNEAAVLGRFIPEFGKIVSMMQFNMYHHYTVDEHLLRAVDVLSRIERGLEEEAHPLTAMLMPAIEDREALYVAVLLHDIAKGRPEDHSVAGAKVARKLCPRFRLSPKQTETVVWLVEEHLTMSMVAQTRDLNDRKTIVDFAERVQSLERLKMLLILTVCDIRAVGPGVWNGWKGQLLRTLYYETELLLSGGFSELSRKERAKHAADMLEEALADWPKEERQTYVRLHYQPYLLTVALDEQVRHAAFIREADAAGRTLATMVRTHDFHAITEITVLSPDHPRLLTVIAGACAAAGANIVGAQIHTTSDGRALDTILVNREFSVAEDETRRAASIGKLIEDVLSGRKKLPDVIASRTRSKKRSRAFTVTPEVTISNALSNKFTVIEVEGLDRTGLLSEVTAVLSDLSLDIASAHITTFGEKVIDTFYVTDLVGSKITSENRQMNIAARLKAVLAGEVDEARERMPSGIIAPTPVPRASHGSKATKAET.

The uridylyltransferase stretch occupies residues 1 to 377 (MARHETSFPE…RFRNRVRKIP (377 aa)). Residues 378–733 (GTLDFVDDGG…VRTHDFHAIT (356 aa)) form a uridylyl-removing region. Positions 494-610 (VDEHLLRAVD…VDFAERVQSL (117 aa)) constitute an HD domain. 2 consecutive ACT domains span residues 734–815 (EITV…DVIA) and 845–926 (VIEV…ERMP). Residues 925–949 (MPSGIIAPTPVPRASHGSKATKAET) are disordered.

This sequence belongs to the GlnD family. The cofactor is Mg(2+).

It catalyses the reaction [protein-PII]-L-tyrosine + UTP = [protein-PII]-uridylyl-L-tyrosine + diphosphate. It carries out the reaction [protein-PII]-uridylyl-L-tyrosine + H2O = [protein-PII]-L-tyrosine + UMP + H(+). With respect to regulation, uridylyltransferase (UTase) activity is inhibited by glutamine, while glutamine activates uridylyl-removing (UR) activity. Functionally, modifies, by uridylylation and deuridylylation, the PII regulatory proteins (GlnB and homologs), in response to the nitrogen status of the cell that GlnD senses through the glutamine level. Under low glutamine levels, catalyzes the conversion of the PII proteins and UTP to PII-UMP and PPi, while under higher glutamine levels, GlnD hydrolyzes PII-UMP to PII and UMP (deuridylylation). Thus, controls uridylylation state and activity of the PII proteins, and plays an important role in the regulation of nitrogen fixation and metabolism. The protein is Bifunctional uridylyltransferase/uridylyl-removing enzyme of Sinorhizobium medicae (strain WSM419) (Ensifer medicae).